Here is a 986-residue protein sequence, read N- to C-terminus: MAGVPVGALLPLLVGVCGAVTGSRVYPANEVTLLDSRSVQGELGWIASPLEGGWEEVSIMDEKNTPIRTYQVCNVMEPSQNNWLRTDWIPREGAQRVYIEIKFTLRDCNSLPGVMGTCKETFNLYYYESNNDKERFIRESQFAKIDTIAADESFTQVDIGDRIMKLNTEVRDVGPLSKKGFYLAFQDVGACIALVSVRVFYKKCPLTVRNLAQFPDTITGADTSSLVEVRGSCVNNSEEKDVPKMYCGADGEWLVPIGNCLCNAGYEERNGECQACKIGYYKALSTDVACAKCPPHSYSIWEGSTSCTCDRGFFRAENDAASMPCTRPPSAPQNLISNVNETSVNLEWSAPQNKGGRDDISYNVVCKRCGAGEPSHCRSCGSGVHFSPQQNGLKTTKVSITDLLAHTNYTFEVWAVNGVSKHNPSQDQAVSVTVTTNQAAPSPIALIQAKEITRHSVALAWLEPDRPNGVILEYEVKYYEKDQNERSYRIVKTASRNTDIKGLNPLTSYVFHVRARTAAGYGDFSGPFEFTTNTVPSPIIGDGTNPTVLLVSVAGSVVLVVILIAAFVISRRRSKYSKAKQEADEEKHLNQGVRTYVDPFTYEDPNQAVREFAKEIDASCIKIEKVIGVGEFGEVCSGRLKVPGKREICVAIKTLKAGYTDKQRRDFLSEASIMGQFDHPNIIHLEGVVTKCKPVMIITEYMENGSLDAFLRKNDGRFTVIQLVGMLRGIGSGMKYLSDMSYVHRDLAARNILVNSNLVCKVSDFGMSRVLEDDPEAAYTTRGGKIPIRWTAPEAIAYRKFTSASDVWSYGIVMWEVMSYGERPYWDMSNQDVIKAIEEGYRLPPPMDCPIALHQLMLDCWQKERSDRPKFGQIVNMLDKLIRNPNSLKRTGSESSRPSTALLDPSSPEFSAVVSVSDWLQAIKMERYKDNFTAAGYTTLEAVVHMNQDDLARIGITAITHQNKILSSVQAMRSQMQQMHGRMVPV.

A signal peptide spans 1 to 19; the sequence is MAGVPVGALLPLLVGVCGA. The Extracellular segment spans residues 20–547; it reads VTGSRVYPAN…PIIGDGTNPT (528 aa). The 180-residue stretch at 30-209 folds into the Eph LBD domain; it reads EVTLLDSRSV…FYKKCPLTVR (180 aa). N-linked (GlcNAc...) asparagine glycans are attached at residues Asn-235, Asn-340, and Asn-408. Fibronectin type-III domains are found at residues 328–439 and 440–537; these read PPSA…TNQA and APSP…TVPS. The chain crosses the membrane as a helical span at residues 548–569; the sequence is VLLVSVAGSVVLVVILIAAFVI. Over 570–986 the chain is Cytoplasmic; sequence SRRRSKYSKA…QQMHGRMVPV (417 aa). 2 positions are modified to phosphotyrosine; by autocatalysis: Tyr-596 and Tyr-602. A Protein kinase domain is found at 621 to 882; that stretch reads IKIEKVIGVG…QIVNMLDKLI (262 aa). Residues 627 to 635 and Lys-653 contribute to the ATP site; that span reads IGVGEFGEV. The active-site Proton acceptor is the Asp-746. Phosphotyrosine; by autocatalysis is present on residues Tyr-779 and Tyr-928. In terms of domain architecture, SAM spans 911 to 975; sequence SAVVSVSDWL…LSSVQAMRSQ (65 aa). Positions 984–986 match the PDZ-binding motif; that stretch reads VPV.

Belongs to the protein kinase superfamily. Tyr protein kinase family. Ephrin receptor subfamily. In terms of assembly, interacts with the src family kinase, p59-Fyn, through the major phosphorylation site at position Tyr-602. Interacts (via PDZ motif) with SIPA1L1 (via PDZ domain); controls neuronal morphology through regulation of the RAP1 (RAP1A or RAP1B) and RAP2 (RAP2A, RAP2B or RAP2C) GTPases. Expressed at high levels in brain, with expression also detected in the kidney, lung, muscle and thymus.

It localises to the cell membrane. The protein resides in the early endosome. It carries out the reaction L-tyrosyl-[protein] + ATP = O-phospho-L-tyrosyl-[protein] + ADP + H(+). Its function is as follows. Receptor tyrosine kinase which binds membrane-bound ephrin family ligands residing on adjacent cells, leading to contact-dependent bidirectional signaling into neighboring cells. The signaling pathway downstream of the receptor is referred to as forward signaling while the signaling pathway downstream of the ephrin ligand is referred to as reverse signaling. Highly promiscuous, it has the unique property among Eph receptors to bind and to be physiologically activated by both GPI-anchored ephrin-A and transmembrane ephrin-B ligands including EFNA1 and EFNB3. Upon activation by ephrin ligands, modulates cell morphology and integrin-dependent cell adhesion through regulation of the Rac, Rap and Rho GTPases activity. Plays an important role in the development of the nervous system controlling different steps of axonal guidance including the establishment of the corticospinal projections. This Gallus gallus (Chicken) protein is Ephrin type-A receptor 4 (EPHA4).